Consider the following 49-residue polypeptide: Osteocalcin (49 aa).

Residues 1–47 (YLYQWLGAPAPYPDPLEPKREVCELNPDCDELADHIGFQEAYRRFYG) enclose the Gla domain. Residue Pro-9 is modified to 4-hydroxyproline. 4 residues coordinate Ca(2+): Glu-17, Glu-21, Glu-24, and Asp-30. 4-carboxyglutamate occurs at positions 17, 21, and 24. Cys-23 and Cys-29 are disulfide-bonded.

The protein belongs to the osteocalcin/matrix Gla protein family. Gamma-carboxyglutamate residues are formed by vitamin K dependent carboxylation by GGCX. These residues are essential for the binding of calcium. Decarboxylation promotes the hormone activity.

The protein resides in the secreted. In terms of biological role, the carboxylated form is one of the main organic components of the bone matrix, which constitutes 1-2% of the total bone protein: it acts as a negative regulator of bone formation and is required to limit bone formation without impairing bone resorption or mineralization. The carboxylated form binds strongly to apatite and calcium. Functionally, the uncarboxylated form acts as a hormone secreted by osteoblasts, which regulates different cellular processes, such as energy metabolism, male fertility and brain development. Regulates of energy metabolism by acting as a hormone favoring pancreatic beta-cell proliferation, insulin secretion and sensitivity and energy expenditure. Uncarboxylated osteocalcin hormone also promotes testosterone production in the testes: acts as a ligand for G protein-coupled receptor GPRC6A at the surface of Leydig cells, initiating a signaling response that promotes the expression of enzymes required for testosterone synthesis in a CREB-dependent manner. Also acts as a regulator of brain development: osteocalcin hormone crosses the blood-brain barrier and acts as a ligand for GPR158 on neurons, initiating a signaling response that prevents neuronal apoptosis in the hippocampus, favors the synthesis of all monoamine neurotransmitters and inhibits that of gamma-aminobutyric acid (GABA). Osteocalcin also crosses the placenta during pregnancy and maternal osteocalcin is required for fetal brain development. This Macaca fascicularis (Crab-eating macaque) protein is Osteocalcin (BGLAP).